The chain runs to 151 residues: Spore coat polysaccharide biosynthesis protein SpsL (151 aa).

The protein to dTDP-4-dehydrorhamnose reductase.

It functions in the pathway spore coat biogenesis; spore coat polysaccharide biosynthesis. This is Spore coat polysaccharide biosynthesis protein SpsL (spsL) from Bacillus subtilis (strain 168).